The sequence spans 98 residues: Protein translation factor SUI1 homolog (98 aa).

Belongs to the SUI1 family.

This chain is Protein translation factor SUI1 homolog, found in Thermococcus kodakarensis (strain ATCC BAA-918 / JCM 12380 / KOD1) (Pyrococcus kodakaraensis (strain KOD1)).